Reading from the N-terminus, the 103-residue chain is Co-chaperonin GroES (103 aa).

This sequence belongs to the GroES chaperonin family. As to quaternary structure, heptamer of 7 subunits arranged in a ring. Interacts with the chaperonin GroEL.

The protein localises to the cytoplasm. Together with the chaperonin GroEL, plays an essential role in assisting protein folding. The GroEL-GroES system forms a nano-cage that allows encapsulation of the non-native substrate proteins and provides a physical environment optimized to promote and accelerate protein folding. GroES binds to the apical surface of the GroEL ring, thereby capping the opening of the GroEL channel. The chain is Co-chaperonin GroES from Synechococcus sp. (strain JA-2-3B'a(2-13)) (Cyanobacteria bacterium Yellowstone B-Prime).